A 249-amino-acid polypeptide reads, in one-letter code: Caffeoyl-CoA O-methyltransferase 1 (249 aa).

K23 contributes to the substrate binding site. S-adenosyl-L-methionine is bound by residues T65, E87, 89-90, S95, D113, and A142; that span reads GV. D165 serves as a coordination point for substrate. Position 165 (D165) interacts with a divalent metal cation. An S-adenosyl-L-methionine-binding site is contributed by D167. A divalent metal cation is bound by residues D191 and N192. Residue N196 participates in substrate binding.

The protein belongs to the class I-like SAM-binding methyltransferase superfamily. Cation-dependent O-methyltransferase family. CCoAMT subfamily. A divalent metal cation is required as a cofactor. Mostly expressed in petal limbs and tubes, and, at low levels, in flower buds, stamens, pistils, stems, roots and leaves.

Its subcellular location is the cytoplasm. The protein resides in the cytosol. It catalyses the reaction (E)-caffeoyl-CoA + S-adenosyl-L-methionine = (E)-feruloyl-CoA + S-adenosyl-L-homocysteine + H(+). The catalysed reaction is (E)-5-hydroxyferuloyl-CoA + S-adenosyl-L-methionine = (E)-sinapoyl-CoA + S-adenosyl-L-homocysteine + H(+). Its pathway is aromatic compound metabolism; phenylpropanoid biosynthesis. Functionally, involved in the production of floral volatile phenylpropanoids in flowers of fragrant cultivars (e.g. cv. Mitchell and cv. V26) from cinnamic acid, a common precursor with the anthocyanin biosynthesis pathway involved in flower pigmentation. Methylates caffeoyl-CoA to feruloyl-CoA, also able to methylate 5-hydroxyferuloyl-CoA. In Petunia hybrida (Petunia), this protein is Caffeoyl-CoA O-methyltransferase 1.